The chain runs to 349 residues: Twinfilin-2 (349 aa).

An N-acetylalanine modification is found at alanine 2. 2 ADF-H domains span residues 4–139 (QTGI…KHLS) and 177–313 (GLAF…DEVH). Position 14 is an N6-acetyllysine (lysine 14). A Phosphotyrosine modification is found at tyrosine 309. The interval 322–349 (AFAKPKGPGGKRGHKRLIRGPGENGDDS) is disordered. Residues 330–339 (GGKRGHKRLI) are compositionally biased toward basic residues. Serine 349 carries the phosphoserine modification.

This sequence belongs to the actin-binding proteins ADF family. Twinfilin subfamily. Interacts with G-actin; ADP-actin form and capping protein (CP). May also be able to interact with TWF1 and phosphoinositides, PI(4,5)P2. When bound to PI(4,5)P2, it is down-regulated. Interacts with MYO7A. In vitro, phosphorylated by PRKCZ, CK2 and SRC. In terms of tissue distribution, ubiquitously expressed (at protein level).

It is found in the cytoplasm. The protein localises to the cytoskeleton. It localises to the perinuclear region. Its subcellular location is the cell projection. The protein resides in the stereocilium. In terms of biological role, actin-binding protein involved in motile and morphological processes. Inhibits actin polymerization, likely by sequestering G-actin. By capping the barbed ends of filaments, it also regulates motility. Seems to play an important role in clathrin-mediated endocytosis and distribution of endocytic organelles. May play a role in regulating the mature length of the middle and short rows of stereocilia. This Homo sapiens (Human) protein is Twinfilin-2 (TWF2).